Here is a 27-residue protein sequence, read N- to C-terminus: L-amino-acid oxidase (27 aa).

Homodimer; non-covalently linked. FAD is required as a cofactor. In terms of processing, contains 2 disulfide bonds. N-glycosylated. In terms of tissue distribution, expressed by the venom gland.

Its subcellular location is the secreted. It carries out the reaction an L-alpha-amino acid + O2 + H2O = a 2-oxocarboxylate + H2O2 + NH4(+). The enzyme catalyses L-leucine + O2 + H2O = 4-methyl-2-oxopentanoate + H2O2 + NH4(+). Its function is as follows. Catalyzes an oxidative deamination of predominantly hydrophobic and aromatic L-amino acids, thus producing hydrogen peroxide that may contribute to the diverse toxic effects of this enzyme. Shows activity on L-Leu. Exhibits diverse biological activities, such as hemolysis, edema, apoptosis, as well as induction of platelet aggregation. Effects of snake L-amino oxidases on platelets are controversial, since they either induce aggregation or inhibit agonist-induced aggregation. These different effects are probably due to different experimental conditions. Unlike other snake venom L-amino acid oxidases, does not induce hemorrhage. This protein may also have antibacterial and antiparasitic activities. This chain is L-amino-acid oxidase, found in Eristicophis macmahoni (Leaf-nosed viper).